The following is a 323-amino-acid chain: Phosphomevalonate kinase (323 aa).

The protein belongs to the GHMP kinase family. Homodimer. Mg(2+) serves as cofactor.

It carries out the reaction (R)-5-phosphomevalonate + ATP = (R)-5-diphosphomevalonate + ADP. It functions in the pathway isoprenoid biosynthesis; isopentenyl diphosphate biosynthesis via mevalonate pathway; isopentenyl diphosphate from (R)-mevalonate: step 2/3. In terms of biological role, catalyzes the phosphorylation of (R)-mevalonate 5-phosphate (MVAP) to (R)-mevalonate 5-diphosphate (MVAPP). Functions in the mevalonate (MVA) pathway leading to isopentenyl diphosphate (IPP), a key precursor for the biosynthesis of isoprenoid compounds such as archaeal membrane lipids. This chain is Phosphomevalonate kinase, found in Saccharolobus solfataricus (strain ATCC 35092 / DSM 1617 / JCM 11322 / P2) (Sulfolobus solfataricus).